The primary structure comprises 438 residues: GTPase Obg (438 aa).

Positions 2-160 constitute an Obg domain; the sequence is NMFVDQIKIE…HYLELELKML (159 aa). Positions 161–337 constitute an OBG-type G domain; it reads ADVGLIGFPS…LMQLTADLLD (177 aa). GTP contacts are provided by residues 167 to 174, 192 to 196, 214 to 217, 284 to 287, and 318 to 320; these read GFPSVGKS, FTTLT, DMPG, TKMD, and SAV. Serine 174 and threonine 194 together coordinate Mg(2+). Positions 360–438 constitute an OCT domain; the sequence is PDKKDEADFT…IEKFVFEFIQ (79 aa).

The protein belongs to the TRAFAC class OBG-HflX-like GTPase superfamily. OBG GTPase family. Monomer. Mg(2+) is required as a cofactor.

The protein localises to the cytoplasm. Its function is as follows. An essential GTPase which binds GTP, GDP and possibly (p)ppGpp with moderate affinity, with high nucleotide exchange rates and a fairly low GTP hydrolysis rate. Plays a role in control of the cell cycle, stress response, ribosome biogenesis and in those bacteria that undergo differentiation, in morphogenesis control. The polypeptide is GTPase Obg (Limosilactobacillus reuteri (strain DSM 20016) (Lactobacillus reuteri)).